The chain runs to 253 residues: Adapter protein MecA (253 aa).

It belongs to the MecA family. Homodimer.

Enables the recognition and targeting of unfolded and aggregated proteins to the ClpC protease or to other proteins involved in proteolysis. The polypeptide is Adapter protein MecA (Streptococcus pyogenes serotype M6 (strain ATCC BAA-946 / MGAS10394)).